A 242-amino-acid polypeptide reads, in one-letter code: Ribosomal RNA large subunit methyltransferase E (242 aa).

S-adenosyl-L-methionine is bound by residues G88, W90, D111, D127, and D151. K191 functions as the Proton acceptor in the catalytic mechanism.

Belongs to the class I-like SAM-binding methyltransferase superfamily. RNA methyltransferase RlmE family.

It localises to the cytoplasm. It catalyses the reaction uridine(2552) in 23S rRNA + S-adenosyl-L-methionine = 2'-O-methyluridine(2552) in 23S rRNA + S-adenosyl-L-homocysteine + H(+). In terms of biological role, specifically methylates the uridine in position 2552 of 23S rRNA at the 2'-O position of the ribose in the fully assembled 50S ribosomal subunit. This chain is Ribosomal RNA large subunit methyltransferase E, found in Bartonella tribocorum (strain CIP 105476 / IBS 506).